The following is an 81-amino-acid chain: Small ribosomal subunit protein bS16 (81 aa).

This sequence belongs to the bacterial ribosomal protein bS16 family.

The sequence is that of Small ribosomal subunit protein bS16 from Agathobacter rectalis (strain ATCC 33656 / DSM 3377 / JCM 17463 / KCTC 5835 / VPI 0990) (Eubacterium rectale).